The primary structure comprises 258 residues: Small ribosomal subunit protein uS2 (258 aa).

It belongs to the universal ribosomal protein uS2 family.

This Streptococcus suis (strain 98HAH33) protein is Small ribosomal subunit protein uS2.